We begin with the raw amino-acid sequence, 216 residues long: Ribosomal RNA small subunit methyltransferase G (216 aa).

S-adenosyl-L-methionine-binding positions include glycine 86, leucine 91, 137-138 (VE), and arginine 155.

The protein belongs to the methyltransferase superfamily. RNA methyltransferase RsmG family.

It localises to the cytoplasm. The catalysed reaction is guanosine(527) in 16S rRNA + S-adenosyl-L-methionine = N(7)-methylguanosine(527) in 16S rRNA + S-adenosyl-L-homocysteine. Functionally, specifically methylates the N7 position of guanine in position 527 of 16S rRNA. The sequence is that of Ribosomal RNA small subunit methyltransferase G from Lawsonia intracellularis (strain PHE/MN1-00).